A 245-amino-acid chain; its full sequence is Probable septum site-determining protein MinC (245 aa).

Residues 112–132 (ARERPLESAEPVAPKKPEKPP) show a composition bias toward basic and acidic residues. A disordered region spans residues 112 to 140 (ARERPLESAEPVAPKKPEKPPEPTVKPTR).

This sequence belongs to the MinC family. Interacts with MinD and FtsZ.

In terms of biological role, cell division inhibitor that blocks the formation of polar Z ring septums. Rapidly oscillates between the poles of the cell to destabilize FtsZ filaments that have formed before they mature into polar Z rings. Prevents FtsZ polymerization. The polypeptide is Probable septum site-determining protein MinC (Pseudomonas fluorescens (strain Pf0-1)).